A 398-amino-acid polypeptide reads, in one-letter code: GPI mannosyltransferase 1 (398 aa).

The next 9 helical transmembrane spans lie at 4–24 (LKYLITFSILLRFGFFFFGLY), 79–99 (WYHFGKLLFMVSDVITGLIIL), 114–136 (MILSSIWLLNPMVITISTRGSAE), 156–176 (VILSAIWLGLSIHFKIYPIIY), 209–229 (IIITLTTLAVVNYLMFLKYGW), 271–291 (IEKIAFVPQLLLSAVIIPLIF), 305–325 (FVFVAFNKVITSQYFIWFLIF), 341–361 (ITGISCLLLWIISQATWLYFA), and 375–395 (GLMYSSVFFFLSNCWCTMKFI).

Belongs to the PIGM family.

The protein localises to the endoplasmic reticulum membrane. The protein operates within glycolipid biosynthesis; glycosylphosphatidylinositol-anchor biosynthesis. Functionally, mannosyltransferase involved in glycosylphosphatidylinositol-anchor biosynthesis. Transfers the first alpha-1,4-mannose to GlcN-acyl-PI during GPI precursor assembly. Required for cell wall integrity. In Candida albicans (strain SC5314 / ATCC MYA-2876) (Yeast), this protein is GPI mannosyltransferase 1 (GPI14).